The sequence spans 421 residues: UDP-N-acetylglucosamine 1-carboxyvinyltransferase 1 (421 aa).

22-23 (KN) provides a ligand contact to phosphoenolpyruvate. UDP-N-acetyl-alpha-D-glucosamine is bound at residue Arg95. Cys119 acts as the Proton donor in catalysis. Position 119 is a 2-(S-cysteinyl)pyruvic acid O-phosphothioketal (Cys119). Residues 124-128 (RPIEQ), Asp308, and Val330 each bind UDP-N-acetyl-alpha-D-glucosamine.

This sequence belongs to the EPSP synthase family. MurA subfamily.

The protein localises to the cytoplasm. It catalyses the reaction phosphoenolpyruvate + UDP-N-acetyl-alpha-D-glucosamine = UDP-N-acetyl-3-O-(1-carboxyvinyl)-alpha-D-glucosamine + phosphate. It participates in cell wall biogenesis; peptidoglycan biosynthesis. Its function is as follows. Cell wall formation. Adds enolpyruvyl to UDP-N-acetylglucosamine. The sequence is that of UDP-N-acetylglucosamine 1-carboxyvinyltransferase 1 from Staphylococcus aureus (strain bovine RF122 / ET3-1).